The sequence spans 468 residues: Chromosomal replication initiator protein DnaA (468 aa).

Residues 1–84 (MSSSLWLQCL…RFEVGSRPVA (84 aa)) are domain I, interacts with DnaA modulators. Residues 81–104 (RPVAAPKPAPTRTPADVAAESSAP) form a disordered region. Positions 84-131 (AAPKPAPTRTPADVAAESSAPAQLQARKPVHKTWDDDAQAIADINHRS) are domain II. Residues 132-348 (NVNPKHKFNN…GALNRVIANA (217 aa)) form a domain III, AAA+ region region. 4 residues coordinate ATP: G176, G178, K179, and T180. Residues 349–468 (NFTGRPITID…YSNLIRTLSS (120 aa)) are domain IV, binds dsDNA.

Belongs to the DnaA family. As to quaternary structure, oligomerizes as a right-handed, spiral filament on DNA at oriC.

It localises to the cytoplasm. Functionally, plays an essential role in the initiation and regulation of chromosomal replication. ATP-DnaA binds to the origin of replication (oriC) to initiate formation of the DNA replication initiation complex once per cell cycle. Binds the DnaA box (a 9 base pair repeat at the origin) and separates the double-stranded (ds)DNA. Forms a right-handed helical filament on oriC DNA; dsDNA binds to the exterior of the filament while single-stranded (ss)DNA is stabiized in the filament's interior. The ATP-DnaA-oriC complex binds and stabilizes one strand of the AT-rich DNA unwinding element (DUE), permitting loading of DNA polymerase. After initiation quickly degrades to an ADP-DnaA complex that is not apt for DNA replication. Binds acidic phospholipids. The sequence is that of Chromosomal replication initiator protein DnaA from Vibrio campbellii (strain ATCC BAA-1116).